Reading from the N-terminus, the 104-residue chain is COX assembly mitochondrial protein 1 (104 aa).

One can recognise a CHCH domain in the interval Q10 to K52. 2 consecutive short sequence motifs (cx9C motif) follow at residues C13–C23 and C34–C44. Cystine bridges form between C13-C44 and C23-C34.

Belongs to the CMC family.

Its subcellular location is the mitochondrion inner membrane. Functionally, required for mitochondrial cytochrome c oxidase (COX) assembly and respiration. This is COX assembly mitochondrial protein 1 (cmc1) from Schizosaccharomyces pombe (strain 972 / ATCC 24843) (Fission yeast).